We begin with the raw amino-acid sequence, 1004 residues long: 2-oxoglutarate dehydrogenase E1 component (1004 aa).

It belongs to the alpha-ketoglutarate dehydrogenase family. Homodimer. Part of the 2-oxoglutarate dehydrogenase (OGDH) complex composed of E1 (2-oxoglutarate dehydrogenase), E2 (dihydrolipoamide succinyltransferase) and E3 (dihydrolipoamide dehydrogenase); the complex contains multiple copies of the three enzymatic components (E1, E2 and E3). Requires thiamine diphosphate as cofactor.

It carries out the reaction N(6)-[(R)-lipoyl]-L-lysyl-[protein] + 2-oxoglutarate + H(+) = N(6)-[(R)-S(8)-succinyldihydrolipoyl]-L-lysyl-[protein] + CO2. Its function is as follows. E1 component of the 2-oxoglutarate dehydrogenase (OGDH) complex which catalyzes the decarboxylation of 2-oxoglutarate, the first step in the conversion of 2-oxoglutarate to succinyl-CoA and CO(2). The polypeptide is 2-oxoglutarate dehydrogenase E1 component (Brucella abortus (strain S19)).